The chain runs to 305 residues: Secreted mono- and diacylglycerol lipase A (305 aa).

Residues 1–26 (MRLSFFTALSAVASLGYALPGKLQSR) form the signal peptide. Cystine bridges form between Cys62–Cys67 and Cys129–Cys132. Ser171 acts as the Nucleophile in catalysis. Residue Asp225 is the Charge relay system of the active site. N-linked (GlcNAc...) asparagine glycosylation is present at Asn251. His285 serves as the catalytic Charge relay system. Residues 303–305 (KRV) constitute a propeptide, removed in mature form.

The protein belongs to the AB hydrolase superfamily. Lipase family. Class 3 subfamily. Post-translationally, multiple forms of this lipase are due to the presence of different carbohydrates, which may contribute to the stability of this lipase but not to the enzyme activity.

It is found in the secreted. It catalyses the reaction a monoacylglycerol + H2O = glycerol + a fatty acid + H(+). The enzyme catalyses a diacylglycerol + H2O = a monoacylglycerol + a fatty acid + H(+). With respect to regulation, both Fe(3+) and Hg(2+) inhibit the activity significantly. Functionally, secreted lipase strictly specific to mono- and diacylglycerol, but not triacylglycerol. Hydrolyzes long-chain monoacylglycerols most efficiently with the highest activities observed on 1- and 3- monopalmitoyl-sn-glycerol or 1-monostearoyl-rac-glycerol. Prefers to attack alpha positions to beta positions of monoacylglycerol, but shows no stereospecificity on mono- and diacylglycerol. The sequence is that of Secreted mono- and diacylglycerol lipase A from Penicillium camembertii.